An 81-amino-acid chain; its full sequence is NAD(P)H-quinone oxidoreductase subunit L (81 aa).

The next 2 helical transmembrane spans lie at 13–33 (LLVI…IPLF) and 51–71 (LGIY…APFL).

The protein belongs to the complex I NdhL subunit family. As to quaternary structure, NDH-1 can be composed of about 15 different subunits; different subcomplexes with different compositions have been identified which probably have different functions.

It localises to the cellular thylakoid membrane. It catalyses the reaction a plastoquinone + NADH + (n+1) H(+)(in) = a plastoquinol + NAD(+) + n H(+)(out). The catalysed reaction is a plastoquinone + NADPH + (n+1) H(+)(in) = a plastoquinol + NADP(+) + n H(+)(out). Its function is as follows. NDH-1 shuttles electrons from an unknown electron donor, via FMN and iron-sulfur (Fe-S) centers, to quinones in the respiratory and/or the photosynthetic chain. The immediate electron acceptor for the enzyme in this species is believed to be plastoquinone. Couples the redox reaction to proton translocation, and thus conserves the redox energy in a proton gradient. Cyanobacterial NDH-1 also plays a role in inorganic carbon-concentration. This chain is NAD(P)H-quinone oxidoreductase subunit L, found in Synechococcus sp. (strain WH7803).